The primary structure comprises 394 residues: NAD(P)H-quinone oxidoreductase subunit H (394 aa).

Belongs to the complex I 49 kDa subunit family. In terms of assembly, NDH-1 can be composed of about 15 different subunits; different subcomplexes with different compositions have been identified which probably have different functions.

The protein resides in the cellular thylakoid membrane. It carries out the reaction a plastoquinone + NADH + (n+1) H(+)(in) = a plastoquinol + NAD(+) + n H(+)(out). The enzyme catalyses a plastoquinone + NADPH + (n+1) H(+)(in) = a plastoquinol + NADP(+) + n H(+)(out). Functionally, NDH-1 shuttles electrons from an unknown electron donor, via FMN and iron-sulfur (Fe-S) centers, to quinones in the respiratory and/or the photosynthetic chain. The immediate electron acceptor for the enzyme in this species is believed to be plastoquinone. Couples the redox reaction to proton translocation, and thus conserves the redox energy in a proton gradient. Cyanobacterial NDH-1 also plays a role in inorganic carbon-concentration. The protein is NAD(P)H-quinone oxidoreductase subunit H of Trichodesmium erythraeum (strain IMS101).